The primary structure comprises 481 residues: MPGFQSLRLDVLSPVDHSFPDYNPCYYLYFRSPSASDVRTSLQRGLEKLIKILPFITGEVVPCDGDRMEKRNGLLCIKYTASPDESLPIIEFREDMSLSVENISTSKTRTGLEDVHLAKTLAPLPLTPNPSRPSYVVRFRATTVRDGVVLAMSFSHFVFDATGAGHLMEHFAECVREPEPKPCDIDQETLRQALWHINGDTGVIPNEPGDCHSLPAFMLPPGGREAIPEMAAPGMRVCRWKISAAKVELLKNTCNDLLRSLDYKAGDNSVNFLSSQDVLTGLLTTCLKHDPKGKVEGSDIGVAVNLRNRLSPEWPTGYFGNMAKYAIAPGLAEPTAEELAVAHRLVAENPKILPAASDIARLYRNACSIRHTISQISDVHIRGFVSWLNSCKDLGPLTTPFPFINFTSWRHLNLYELDFGGALGYVDDIQTHGMMPTLGIILPRAKAVQGTEAHWDVLFYVKNEDYPAVMKQGLLRFLTVD.

The protein belongs to the fumigaclavine B O-acetyltransferase family. In terms of assembly, monomer.

It functions in the pathway secondary metabolite biosynthesis; terpenoid biosynthesis. Functionally, O-acetyltransferase; part of the gene cluster that mediates the biosynthesis of anditomin, a fungal meroterpenoid. The first step of the pathway is the synthesis of 3,5-dimethylorsellinic acid (DMOA) by the polyketide synthase andM. DMOA is then converted to the phthalide compound 5,7-dihydroxy-4,6-dimethylphthalide (DHDMP) by the cytochrome P450 monooxygenase andK, which is further prenylated by the prenyltransferase andD to yield farnesyl-DHDMP. Further epoxidation by the FAD-dependent monooxygenase andE leads to epoxyfarnesyl-DHDMP. The next step involves the terpene cyclase andB that converts epoxyfarnesyl-DHDMP into preandiloid A through opening of the epoxide ring followed by the cyclization of the farnesyl moiety. Preandiloid A is in turn oxidized at the C-3 hydroxyl group to yield preandiloid B by the dehydrogenase andC. The dioxygenase andA is solely responsible for the dehydrogenation of preandiloid B leading to the enone preandiloid C, as well as for the intriguing structural rearrangement to generate the bicyclo[2.2.2]octane core, transforming preandiloid C into andiconin. FAD-binding monooxygenase andJ then produces andilesin D which is reduced by dehydrogenase andI to yield andilesin A. Action of acetyltransferase andG followed by a spontaneous acetate elimination leads then to andilesin B, which is in turn substrate of the short chain dehydrogenase andH to yield andilesin C. Finally, the dioxygenase andF catalyzes the transformation of andilesin C to anditomin. The protein is O-acetyltransferase andG of Emericella variicolor (Aspergillus stellatus).